A 316-amino-acid chain; its full sequence is IDS-like terpene synthase 2 (316 aa).

Positions 69 and 73 each coordinate Mg(2+).

It belongs to the FPP/GGPP synthase family. Mg(2+) serves as cofactor.

The catalysed reaction is (2E)-geranyl diphosphate + H2O = linalool + diphosphate. It catalyses the reaction (2E,6E)-farnesyl diphosphate + H2O = (6E)-nerolidol + diphosphate. Functionally, terpene synthase that shows monoterpene synthase activity and produces linalool, using geranyl diphosphate (GPP) as substrate. Also shows sesquiterpene synthase activity as it is able to convert farnesyl diphosphate (FPP) into (E)-nerolidol. This chain is IDS-like terpene synthase 2, found in Melampsora larici-populina (strain 98AG31 / pathotype 3-4-7) (Poplar leaf rust fungus).